A 266-amino-acid polypeptide reads, in one-letter code: uncharacterized protein (266 aa).

S176 carries the post-translational modification Phosphoserine. The residue at position 178 (T178) is a Phosphothreonine.

This is an uncharacterized protein from Schizosaccharomyces pombe (strain 972 / ATCC 24843) (Fission yeast).